The primary structure comprises 75 residues: Metallothionein-like protein 1 (75 aa).

It belongs to the metallothionein superfamily. Type 15 family.

Its function is as follows. Metallothioneins have a high content of cysteine residues that bind various heavy metals. This Pisum sativum (Garden pea) protein is Metallothionein-like protein 1 (MTA).